The sequence spans 180 residues: Adenine phosphoribosyltransferase (180 aa).

It belongs to the purine/pyrimidine phosphoribosyltransferase family. In terms of assembly, homodimer.

It localises to the cytoplasm. The catalysed reaction is AMP + diphosphate = 5-phospho-alpha-D-ribose 1-diphosphate + adenine. Its pathway is purine metabolism; AMP biosynthesis via salvage pathway; AMP from adenine: step 1/1. Its function is as follows. Catalyzes a salvage reaction resulting in the formation of AMP, that is energically less costly than de novo synthesis. The protein is Adenine phosphoribosyltransferase of Haemophilus influenzae (strain 86-028NP).